The sequence spans 792 residues: Coiled-coil domain-containing protein R3HCC1L (792 aa).

The segment at 7–27 is EJC-binding motif; may mediate interaction with the EJC; it reads RCRVRARRPDMALYVPKARRG. Disordered stretches follow at residues 32–61 and 527–567; these read KTGDEEESCGSPNSVVKEKQKESSLSQKEV and EFKT…TSHT. A Phosphoserine modification is found at Ser-688. Thr-712 is modified (phosphothreonine). Residues 751–783 are a coiled coil; it reads RSKQSKTEREAELKKLQEARERKRLEAKQREDI. Residues 772-792 are disordered; it reads RKRLEAKQREDIWEGRDQSTV.

In terms of assembly, may interact with the exon junction complex (EJC) composed at least of CASC3, EIF4A3, MAGOH and RBM8A. Expressed in placenta.

This chain is Coiled-coil domain-containing protein R3HCC1L (R3HCC1L), found in Homo sapiens (Human).